The primary structure comprises 366 residues: Chorismate synthase (366 aa).

NADP(+)-binding residues include R48 and R54. FMN is bound by residues 125 to 127 (RSS), 241 to 242 (NA), G285, 300 to 304 (KPTSS), and R326.

It belongs to the chorismate synthase family. Homotetramer. The cofactor is FMNH2.

The catalysed reaction is 5-O-(1-carboxyvinyl)-3-phosphoshikimate = chorismate + phosphate. The protein operates within metabolic intermediate biosynthesis; chorismate biosynthesis; chorismate from D-erythrose 4-phosphate and phosphoenolpyruvate: step 7/7. In terms of biological role, catalyzes the anti-1,4-elimination of the C-3 phosphate and the C-6 proR hydrogen from 5-enolpyruvylshikimate-3-phosphate (EPSP) to yield chorismate, which is the branch point compound that serves as the starting substrate for the three terminal pathways of aromatic amino acid biosynthesis. This reaction introduces a second double bond into the aromatic ring system. This Cereibacter sphaeroides (strain ATCC 17023 / DSM 158 / JCM 6121 / CCUG 31486 / LMG 2827 / NBRC 12203 / NCIMB 8253 / ATH 2.4.1.) (Rhodobacter sphaeroides) protein is Chorismate synthase.